The following is a 272-amino-acid chain: Ribosomal RNA small subunit methyltransferase A (272 aa).

Positions 16, 18, 43, 64, 89, and 110 each coordinate S-adenosyl-L-methionine.

It belongs to the class I-like SAM-binding methyltransferase superfamily. rRNA adenine N(6)-methyltransferase family. RsmA subfamily.

Its subcellular location is the cytoplasm. The enzyme catalyses adenosine(1518)/adenosine(1519) in 16S rRNA + 4 S-adenosyl-L-methionine = N(6)-dimethyladenosine(1518)/N(6)-dimethyladenosine(1519) in 16S rRNA + 4 S-adenosyl-L-homocysteine + 4 H(+). Its function is as follows. Specifically dimethylates two adjacent adenosines (A1518 and A1519) in the loop of a conserved hairpin near the 3'-end of 16S rRNA in the 30S particle. May play a critical role in biogenesis of 30S subunits. The protein is Ribosomal RNA small subunit methyltransferase A of Pseudomonas fluorescens (strain Pf0-1).